Consider the following 330-residue polypeptide: Inactive serine protease 45 (330 aa).

Residues 1–35 (MATSLRLLDAGPGSLRRWIPTCFAALLLLPPRPNL) form the signal peptide. The Peptidase S1 domain occupies 45-291 (VCGAPWWSDS…YTGWIKEQVS (247 aa)). Intrachain disulfides connect Cys75/Cys91, Cys172/Cys249, Cys207/Cys230, and Cys239/Cys267. N-linked (GlcNAc...) asparagine glycosylation is present at Asn272.

It belongs to the peptidase S1 family.

It localises to the secreted. The sequence is that of Inactive serine protease 45 (Prss45) from Rattus norvegicus (Rat).